We begin with the raw amino-acid sequence, 341 residues long: L-threonine 3-dehydrogenase (341 aa).

Cys38 serves as a coordination point for Zn(2+). Active-site charge relay system residues include Thr40 and His43. Zn(2+) is bound by residues His63, Glu64, Cys93, Cys96, Cys99, and Cys107. Residues Ile175, Asp195, Arg200, 262–264 (LGI), and 286–287 (IY) each bind NAD(+).

Belongs to the zinc-containing alcohol dehydrogenase family. Homotetramer. It depends on Zn(2+) as a cofactor.

The protein localises to the cytoplasm. The enzyme catalyses L-threonine + NAD(+) = (2S)-2-amino-3-oxobutanoate + NADH + H(+). It participates in amino-acid degradation; L-threonine degradation via oxydo-reductase pathway; glycine from L-threonine: step 1/2. In terms of biological role, catalyzes the NAD(+)-dependent oxidation of L-threonine to 2-amino-3-ketobutyrate. The polypeptide is L-threonine 3-dehydrogenase (Klebsiella pneumoniae (strain 342)).